A 203-amino-acid chain; its full sequence is Shikimate kinase (203 aa).

Gly38 to Thr43 contributes to the ATP binding site. Ser42 lines the Mg(2+) pocket. Substrate contacts are provided by Asp60, Arg84, and Gly106. Arg144 serves as a coordination point for ATP. Substrate is bound at residue Arg163.

This sequence belongs to the shikimate kinase family. In terms of assembly, monomer. Requires Mg(2+) as cofactor.

The protein resides in the cytoplasm. The enzyme catalyses shikimate + ATP = 3-phosphoshikimate + ADP + H(+). Its pathway is metabolic intermediate biosynthesis; chorismate biosynthesis; chorismate from D-erythrose 4-phosphate and phosphoenolpyruvate: step 5/7. In terms of biological role, catalyzes the specific phosphorylation of the 3-hydroxyl group of shikimic acid using ATP as a cosubstrate. The protein is Shikimate kinase of Rhodopseudomonas palustris (strain ATCC BAA-98 / CGA009).